The chain runs to 602 residues: Aspartate--tRNA(Asp/Asn) ligase (602 aa).

Glutamate 176 contributes to the L-aspartate binding site. The tract at residues glutamine 200–lysine 203 is aspartate. Residues arginine 222 and histidine 452 each contribute to the L-aspartate site. Arginine 222–glutamate 224 contributes to the ATP binding site. ATP is bound at residue glutamate 490. L-aspartate is bound at residue arginine 497. ATP is bound at residue glycine 542–arginine 545.

Belongs to the class-II aminoacyl-tRNA synthetase family. Type 1 subfamily. As to quaternary structure, homodimer.

The protein localises to the cytoplasm. The catalysed reaction is tRNA(Asx) + L-aspartate + ATP = L-aspartyl-tRNA(Asx) + AMP + diphosphate. In terms of biological role, aspartyl-tRNA synthetase with relaxed tRNA specificity since it is able to aspartylate not only its cognate tRNA(Asp) but also tRNA(Asn). Reaction proceeds in two steps: L-aspartate is first activated by ATP to form Asp-AMP and then transferred to the acceptor end of tRNA(Asp/Asn). The chain is Aspartate--tRNA(Asp/Asn) ligase from Rickettsia canadensis (strain McKiel).